The primary structure comprises 366 residues: Inositol 2-dehydrogenase (366 aa).

This sequence belongs to the Gfo/Idh/MocA family. In terms of assembly, homotetramer.

The catalysed reaction is myo-inositol + NAD(+) = scyllo-inosose + NADH + H(+). Functionally, involved in the oxidation of myo-inositol (MI) to 2-keto-myo-inositol (2KMI or 2-inosose). This chain is Inositol 2-dehydrogenase, found in Rhodococcus jostii (strain RHA1).